We begin with the raw amino-acid sequence, 363 residues long: Holliday junction branch migration complex subunit RuvB (363 aa).

The segment at 1–44 (MAIKRNQGHGLPPKRDPALGRDALTTSQALPEDQEQSANEDRIR) is disordered. A large ATPase domain (RuvB-L) region spans residues 13 to 204 (PKRDPALGRD…FGLIQRLRFY (192 aa)). 9 residues coordinate ATP: isoleucine 43, arginine 44, glycine 85, lysine 88, threonine 89, threonine 90, arginine 194, tyrosine 204, and arginine 241. Position 89 (threonine 89) interacts with Mg(2+). Positions 205–275 (EVDELIAIVH…VAATALDLYN (71 aa)) are small ATPAse domain (RuvB-S). The tract at residues 278 to 363 (ALGLDWTDRL…EQSTQLDFLP (86 aa)) is head domain (RuvB-H). Residues arginine 333 and arginine 338 each contribute to the DNA site.

This sequence belongs to the RuvB family. Homohexamer. Forms an RuvA(8)-RuvB(12)-Holliday junction (HJ) complex. HJ DNA is sandwiched between 2 RuvA tetramers; dsDNA enters through RuvA and exits via RuvB. An RuvB hexamer assembles on each DNA strand where it exits the tetramer. Each RuvB hexamer is contacted by two RuvA subunits (via domain III) on 2 adjacent RuvB subunits; this complex drives branch migration. In the full resolvosome a probable DNA-RuvA(4)-RuvB(12)-RuvC(2) complex forms which resolves the HJ.

Its subcellular location is the cytoplasm. It carries out the reaction ATP + H2O = ADP + phosphate + H(+). Functionally, the RuvA-RuvB-RuvC complex processes Holliday junction (HJ) DNA during genetic recombination and DNA repair, while the RuvA-RuvB complex plays an important role in the rescue of blocked DNA replication forks via replication fork reversal (RFR). RuvA specifically binds to HJ cruciform DNA, conferring on it an open structure. The RuvB hexamer acts as an ATP-dependent pump, pulling dsDNA into and through the RuvAB complex. RuvB forms 2 homohexamers on either side of HJ DNA bound by 1 or 2 RuvA tetramers; 4 subunits per hexamer contact DNA at a time. Coordinated motions by a converter formed by DNA-disengaged RuvB subunits stimulates ATP hydrolysis and nucleotide exchange. Immobilization of the converter enables RuvB to convert the ATP-contained energy into a lever motion, pulling 2 nucleotides of DNA out of the RuvA tetramer per ATP hydrolyzed, thus driving DNA branch migration. The RuvB motors rotate together with the DNA substrate, which together with the progressing nucleotide cycle form the mechanistic basis for DNA recombination by continuous HJ branch migration. Branch migration allows RuvC to scan DNA until it finds its consensus sequence, where it cleaves and resolves cruciform DNA. The protein is Holliday junction branch migration complex subunit RuvB of Picosynechococcus sp. (strain ATCC 27264 / PCC 7002 / PR-6) (Agmenellum quadruplicatum).